Consider the following 255-residue polypeptide: MFKVRVIPCLDVKDGRVVKGVNFVDLRDAGDPVEAAIAYDAAGADELCFLDITATHENRGIMLDVVRRTAEACFMPVTVGGGVRTVDDIKTLLRSGADKVSINSAAVARREFVKEAAEKFGDQCIVVAIDAKRVPGRDRWEIFTHGGRKGTGIDAIEFAQEVVSLGAGEILLTSMDRDGTRSGFDIPLTRAIADSVQVPVIASGGVGDLDHLVDGIREGHATAVLAASIFHFGEYTIREAKDHMVRAGLPMRLDP.

Residues aspartate 11 and aspartate 130 contribute to the active site.

Belongs to the HisA/HisF family. Heterodimer of HisH and HisF.

It localises to the cytoplasm. The catalysed reaction is 5-[(5-phospho-1-deoxy-D-ribulos-1-ylimino)methylamino]-1-(5-phospho-beta-D-ribosyl)imidazole-4-carboxamide + L-glutamine = D-erythro-1-(imidazol-4-yl)glycerol 3-phosphate + 5-amino-1-(5-phospho-beta-D-ribosyl)imidazole-4-carboxamide + L-glutamate + H(+). Its pathway is amino-acid biosynthesis; L-histidine biosynthesis; L-histidine from 5-phospho-alpha-D-ribose 1-diphosphate: step 5/9. IGPS catalyzes the conversion of PRFAR and glutamine to IGP, AICAR and glutamate. The HisF subunit catalyzes the cyclization activity that produces IGP and AICAR from PRFAR using the ammonia provided by the HisH subunit. The protein is Imidazole glycerol phosphate synthase subunit HisF of Rhodopseudomonas palustris (strain BisB5).